Reading from the N-terminus, the 583-residue chain is Leucine-rich repeat-containing protein 47 (583 aa).

Residue Ala-2 is modified to N-acetylalanine. LRR repeat units lie at residues 76 to 95 (QLHS…SPEL), 100 to 121 (ALRV…QGLG), 130 to 152 (QLQS…ARCA), 154 to 175 (RLQS…LFRP), 180 to 202 (LLSE…AHLA), 203 to 225 (SLKT…ADCP), and 226 to 246 (KLKE…EKMV). The interval 260-300 (VGGRGGGKGKGRAEGSEKEESRRKRRERKQRREGGDGEEQD) is disordered. Basic and acidic residues predominate over residues 270–281 (GRAEGSEKEESR). Phosphoserine is present on residues Ser-315 and Ser-431. Residues 402–437 (LGRKEAKAKELVRQLQLEAEEQRKQKKRQSVSGLHR) adopt a coiled-coil conformation. At Tyr-509 the chain carries Phosphotyrosine. The segment at 513–544 (NKEEGSLSDTEADAVSGQLPDPTTNPSAGKDG) is disordered. Phosphoserine is present on residues Ser-518 and Ser-520.

This chain is Leucine-rich repeat-containing protein 47 (LRRC47), found in Homo sapiens (Human).